The following is a 264-amino-acid chain: 3-methyl-2-oxobutanoate hydroxymethyltransferase (264 aa).

2 residues coordinate Mg(2+): Asp-45 and Asp-84. Residues 45–46, Asp-84, and Lys-112 contribute to the 3-methyl-2-oxobutanoate site; that span reads DS. Glu-114 is a binding site for Mg(2+). Glu-181 functions as the Proton acceptor in the catalytic mechanism.

This sequence belongs to the PanB family. As to quaternary structure, homodecamer; pentamer of dimers. Mg(2+) serves as cofactor.

The protein resides in the cytoplasm. It carries out the reaction 3-methyl-2-oxobutanoate + (6R)-5,10-methylene-5,6,7,8-tetrahydrofolate + H2O = 2-dehydropantoate + (6S)-5,6,7,8-tetrahydrofolate. The protein operates within cofactor biosynthesis; (R)-pantothenate biosynthesis; (R)-pantoate from 3-methyl-2-oxobutanoate: step 1/2. Catalyzes the reversible reaction in which hydroxymethyl group from 5,10-methylenetetrahydrofolate is transferred onto alpha-ketoisovalerate to form ketopantoate. This chain is 3-methyl-2-oxobutanoate hydroxymethyltransferase, found in Vibrio cholerae serotype O1 (strain ATCC 39541 / Classical Ogawa 395 / O395).